We begin with the raw amino-acid sequence, 2359 residues long: Pre-mRNA-processing-splicing factor 8A (2359 aa).

Residues 1 to 54 (MWNNNDGMPLAPPGTGGSMMPPPPAAHPSYTALPPPSNPTPPVEPTPEEAEAKL) are disordered. Pro residues predominate over residues 33–45 (LPPPSNPTPPVEP). The MPN domain maps to 2127 to 2258 (TYIMPKNILK…LTSYKLTQTG (132 aa)).

As to quaternary structure, interacts with CLO.

It is found in the nucleus. Functions as a scaffold that mediates the ordered assembly of spliceosomal proteins and snRNAs. Required for the assembly of the U4/U6-U5 tri-snRNP complex. Required for embryo development. Required for splicing efficiency of COOLAIR introns and usage of the proximal poly(A) site. COOLAIR is a set of long non-coding antisense transcripts produced at the FLOWERING LOCUS C (FLC). COOLAIR initiates just downstream of the major sense transcript poly(A) site and terminates either early or extends into the FLC promoter region. Splicing of COOLAIR by PRP8A is functionally important for FLC regulation. This chain is Pre-mRNA-processing-splicing factor 8A, found in Arabidopsis thaliana (Mouse-ear cress).